The chain runs to 66 residues: Large ribosomal subunit protein uL29 (66 aa).

It belongs to the universal ribosomal protein uL29 family.

The sequence is that of Large ribosomal subunit protein uL29 from Bacillus licheniformis (strain ATCC 14580 / DSM 13 / JCM 2505 / CCUG 7422 / NBRC 12200 / NCIMB 9375 / NCTC 10341 / NRRL NRS-1264 / Gibson 46).